A 413-amino-acid chain; its full sequence is Glucose-1-phosphate adenylyltransferase (413 aa).

Alpha-D-glucose 1-phosphate is bound by residues G163, 179–180, and S197; that span reads EK.

Belongs to the bacterial/plant glucose-1-phosphate adenylyltransferase family. In terms of assembly, homotetramer.

It carries out the reaction alpha-D-glucose 1-phosphate + ATP + H(+) = ADP-alpha-D-glucose + diphosphate. Its pathway is glycan biosynthesis; glycogen biosynthesis. Involved in the biosynthesis of ADP-glucose, a building block required for the elongation reactions to produce glycogen. Catalyzes the reaction between ATP and alpha-D-glucose 1-phosphate (G1P) to produce pyrophosphate and ADP-Glc. The protein is Glucose-1-phosphate adenylyltransferase of Parafrankia sp. (strain EAN1pec).